The sequence spans 66 residues: Large ribosomal subunit protein bL33c (66 aa).

This sequence belongs to the bacterial ribosomal protein bL33 family.

The protein localises to the plastid. It localises to the chloroplast. This chain is Large ribosomal subunit protein bL33c, found in Drimys granadensis.